The sequence spans 942 residues: PH and SEC7 domain-containing protein C11E3.11c (942 aa).

The segment covering 1 to 18 has biased composition (polar residues); sequence MSRNASNAYLKNGNSTPS. Disordered regions lie at residues 1 to 128 and 259 to 308; these read MSRN…TRLN and SRNL…ETTR. A compositionally biased stretch (low complexity) spans 24-40; sequence PSSLSQRSKTSTRSSKP. Composition is skewed to polar residues over residues 50-60, 90-125, 271-284, and 292-305; these read WFKNESSSRHP, ASMS…SSRT, YGNS…SSNY, and NRQS…STSE. The SEC7 domain maps to 295–497; the sequence is SSLSIPKSTS…LSSYKSFASN (203 aa). The 124-residue stretch at 681–804 folds into the PH domain; it reads PYIKQGILKF…WIDALNYWAA (124 aa).

The polypeptide is PH and SEC7 domain-containing protein C11E3.11c (Schizosaccharomyces pombe (strain 972 / ATCC 24843) (Fission yeast)).